Reading from the N-terminus, the 92-residue chain is Small integral membrane protein 12 (92 aa).

A helical membrane pass occupies residues 15-34; sequence YVTFPVAFVVGAVGYHLEWF.

The protein belongs to the SMIM12 family.

The protein localises to the membrane. The chain is Small integral membrane protein 12 (SMIM12) from Canis lupus familiaris (Dog).